The chain runs to 388 residues: S-adenosylmethionine synthase (388 aa).

His16 is an ATP binding site. Asp18 serves as a coordination point for Mg(2+). Glu44 contributes to the K(+) binding site. Positions 57 and 100 each coordinate L-methionine. Positions 100–110 are flexible loop; it reads QSPDIAQGVNE. ATP-binding positions include 167–169, 233–234, Asp242, 248–249, and Lys269; these read DGK, RF, and RK. Residue Asp242 coordinates L-methionine. Lys273 lines the L-methionine pocket.

It belongs to the AdoMet synthase family. As to quaternary structure, homotetramer; dimer of dimers. Mg(2+) is required as a cofactor. Requires K(+) as cofactor.

It is found in the cytoplasm. It carries out the reaction L-methionine + ATP + H2O = S-adenosyl-L-methionine + phosphate + diphosphate. It participates in amino-acid biosynthesis; S-adenosyl-L-methionine biosynthesis; S-adenosyl-L-methionine from L-methionine: step 1/1. Its function is as follows. Catalyzes the formation of S-adenosylmethionine (AdoMet) from methionine and ATP. The overall synthetic reaction is composed of two sequential steps, AdoMet formation and the subsequent tripolyphosphate hydrolysis which occurs prior to release of AdoMet from the enzyme. The polypeptide is S-adenosylmethionine synthase (Desulfosudis oleivorans (strain DSM 6200 / JCM 39069 / Hxd3) (Desulfococcus oleovorans)).